The following is an 84-amino-acid chain: UPF0729 protein F18A11.3 (84 aa).

The helical transmembrane segment at 1–21 threads the bilayer; that stretch reads MVCLPCIFLPIMMAIYMKFIM.

Belongs to the UPF0729 family.

It is found in the cell membrane. The sequence is that of UPF0729 protein F18A11.3 from Caenorhabditis elegans.